The following is a 215-amino-acid chain: Protein GET1 (215 aa).

The Lumenal portion of the chain corresponds to 1–4; sequence MPSL. Residues 5–24 traverse the membrane as a helical segment; it reads LILIFTIEVAVELINTIGAA. The Cytoplasmic segment spans residues 25–110; that stretch reads TINNLLWRIF…NFDKYITGIR (86 aa). The stretch at 72-104 forms a coiled coil; sequence AKWAKLRRQHDKLLEQLEKKKAALDSTKGNFDK. Residues 111-131 form a helical membrane-spanning segment; the sequence is WVGTQGLRYFLPFWYAKVPMF. The Lumenal portion of the chain corresponds to 132 to 155; the sequence is WLPYGWFPYYAEWLVSFPRAPMGS. Residues 156 to 172 traverse the membrane as a helical segment; it reads VSIASWQLACTGFVVLI. The Cytoplasmic portion of the chain corresponds to 173–215; it reads KDAITALVVFVMGMRQSNVKQAVPVKAVSGEKASDEKEGKKEL.

The protein belongs to the WRB/GET1 family. Interacts with GET3.

Its subcellular location is the endoplasmic reticulum membrane. Functionally, required for the post-translational delivery of tail-anchored (TA) proteins to the endoplasmic reticulum. Acts as a membrane receptor for soluble GET3, which recognizes and selectively binds the transmembrane domain of TA proteins in the cytosol. This is Protein GET1 from Pyricularia oryzae (strain 70-15 / ATCC MYA-4617 / FGSC 8958) (Rice blast fungus).